The sequence spans 336 residues: Fimbrial adhesin PapGII (336 aa).

Positions 1-20 (MKKWFPALLFSLCVSGESSA) are cleaved as a signal peptide. 2 disulfides stabilise this stretch: Cys64/Cys138 and Cys217/Cys249. D-galactose is bound by residues Glu79 and 124–127 (GYKW).

Belongs to the adhesin PapG family.

It localises to the secreted. Its subcellular location is the fimbrium. Functionally, tip adhesin component of type P pili that plays a critical role in kidney infection through targeted interaction with the globoseries glycolipids containing the Gal-alpha(1-4)-Gal disaccharide present on uroepithelial cells. In turn, transcriptionally regulates host gene expression in kidney cells, leading to inflammatory pathway activation and renal tissue damage. Acts thereby as key determinant of invasive uropathogenic E.coli (UPEC), which cause pyelonephritis and urinary-source bacteremia. The polypeptide is Fimbrial adhesin PapGII (Escherichia coli).